The chain runs to 864 residues: DNA mismatch repair protein MutS (864 aa).

Glycine 613–serine 620 contacts ATP.

This sequence belongs to the DNA mismatch repair MutS family.

This protein is involved in the repair of mismatches in DNA. It is possible that it carries out the mismatch recognition step. This protein has a weak ATPase activity. The polypeptide is DNA mismatch repair protein MutS (Actinobacillus pleuropneumoniae serotype 7 (strain AP76)).